The primary structure comprises 570 residues: Sulfite reductase [NADPH] hemoprotein beta-component (570 aa).

The [4Fe-4S] cluster site is built by Cys434, Cys440, Cys479, and Cys483. Cys483 contributes to the siroheme binding site.

This sequence belongs to the nitrite and sulfite reductase 4Fe-4S domain family. In terms of assembly, alpha(8)-beta(8). The alpha component is a flavoprotein, the beta component is a hemoprotein. It depends on siroheme as a cofactor. Requires [4Fe-4S] cluster as cofactor.

It catalyses the reaction hydrogen sulfide + 3 NADP(+) + 3 H2O = sulfite + 3 NADPH + 4 H(+). Its pathway is sulfur metabolism; hydrogen sulfide biosynthesis; hydrogen sulfide from sulfite (NADPH route): step 1/1. Component of the sulfite reductase complex that catalyzes the 6-electron reduction of sulfite to sulfide. This is one of several activities required for the biosynthesis of L-cysteine from sulfate. This chain is Sulfite reductase [NADPH] hemoprotein beta-component, found in Salmonella agona (strain SL483).